The chain runs to 963 residues: Importin-13 (963 aa).

HEAT repeat units follow at residues 24–54, 56–88, 95–135, 142–179, 194–231, 236–268, 276–325, 330–372, 375–438, 440–476, 487–522, 524–558, 562–600, 603–648, 676–716, 720–754, 761–803, 815–845, 860–893, and 897–931; these read ENVEKALHQLYYDPNIDNKNLAQKWLMQAQV, PQAWHFSWQLLQPDKVPEIQYFGASALHIKISR, TDQY…LSMM, AVADMVRLFQAEDSPVDSQGRCLALLELLTVLPEEFQT, LAVECGTVFPLLEQLLQQPSSPSCVRQKVLKCFSSWVQ, LQDCEALIQAAFAALQDSELFDSSVEAIVNAIS, VNTL…ALLD, WQSF…DDIL, EAEK…YEML, AELLSNLYDKLGRLLTSSEEPYSWQHTEALLYGFQSI, VVPGLIGLIPRISISNVQLADTVMFTIGALSEWLAD, PVMINSVLPLVLHALGNPELSVSSVSTLKKICREC, LPPYAANIVAVSQDVLMKQIHKTSQCMWLMQALGFLLSA, VEEI…SNLF, PVVV…VKTL, FAPMVPQLCEMLGRMYSTVPQASALDLTRQLVHIF, FPPI…ALKR, VKAVFQCAVLALKFPEAPTVKASCGFFTELL, EDGRMLLIAVLEAIGGQASRSLMDCFADILFALN, and FSLLSMWIKEALQPPGFPSARLSPEQKDTFSQQIL. The Importin N-terminal domain maps to 45–111; that stretch reads AQKWLMQAQV…KAQLFTQITR (67 aa).

The protein belongs to the importin beta family. In terms of assembly, interacts with UBC9, RAN, RBM8A, eIF-1A and PAX6.

The protein localises to the cytoplasm. The protein resides in the nucleus. Its function is as follows. Functions in nuclear protein import as nuclear transport receptor. Serves as receptor for nuclear localization signals (NLS) in cargo substrates. Is thought to mediate docking of the importin/substrate complex to the nuclear pore complex (NPC) through binding to nucleoporin and the complex is subsequently translocated through the pore by an energy requiring, Ran-dependent mechanism. At the nucleoplasmic side of the NPC, Ran binds to the importin, the importin/substrate complex dissociates and importin is re-exported from the nucleus to the cytoplasm where GTP hydrolysis releases Ran. The directionality of nuclear import is thought to be conferred by an asymmetric distribution of the GTP- and GDP-bound forms of Ran between the cytoplasm and nucleus. Mediates the nuclear import of UBC9, the RBM8A/MAGOH complex, PAX6 and probably other members of the paired homeobox family. Also mediates nuclear export of eIF-1A, and the cytoplasmic release of eIF-1A is triggered by the loading of import substrates onto IPO13. This chain is Importin-13 (Ipo13), found in Mus musculus (Mouse).